The chain runs to 364 residues: 3-isopropylmalate dehydrogenase (364 aa).

Position 78-91 (G78–E91) interacts with NAD(+). The substrate site is built by R99, R109, R138, and D228. D228, D252, and D256 together coordinate Mg(2+). NAD(+) is bound at residue G286–N298.

It belongs to the isocitrate and isopropylmalate dehydrogenases family. LeuB type 1 subfamily. Homodimer. Mg(2+) is required as a cofactor. It depends on Mn(2+) as a cofactor.

The protein resides in the cytoplasm. The catalysed reaction is (2R,3S)-3-isopropylmalate + NAD(+) = 4-methyl-2-oxopentanoate + CO2 + NADH. The protein operates within amino-acid biosynthesis; L-leucine biosynthesis; L-leucine from 3-methyl-2-oxobutanoate: step 3/4. In terms of biological role, catalyzes the oxidation of 3-carboxy-2-hydroxy-4-methylpentanoate (3-isopropylmalate) to 3-carboxy-4-methyl-2-oxopentanoate. The product decarboxylates to 4-methyl-2 oxopentanoate. The polypeptide is 3-isopropylmalate dehydrogenase (Buchnera aphidicola subsp. Uroleucon obscurum).